Here is a 274-residue protein sequence, read N- to C-terminus: 2,3,4,5-tetrahydropyridine-2,6-dicarboxylate N-succinyltransferase (274 aa).

Substrate-binding residues include arginine 104 and aspartate 141.

It belongs to the transferase hexapeptide repeat family. As to quaternary structure, homotrimer.

Its subcellular location is the cytoplasm. The enzyme catalyses (S)-2,3,4,5-tetrahydrodipicolinate + succinyl-CoA + H2O = (S)-2-succinylamino-6-oxoheptanedioate + CoA. The protein operates within amino-acid biosynthesis; L-lysine biosynthesis via DAP pathway; LL-2,6-diaminopimelate from (S)-tetrahydrodipicolinate (succinylase route): step 1/3. The sequence is that of 2,3,4,5-tetrahydropyridine-2,6-dicarboxylate N-succinyltransferase from Shewanella frigidimarina (strain NCIMB 400).